The primary structure comprises 382 residues: Gap junction alpha-1 protein (382 aa).

Over 2 to 23 the chain is Cytoplasmic; it reads GDWSALGKLLDKVQAYSTAGGK. Position 5 is a phosphoserine (S5). The chain crosses the membrane as a helical span at residues 24 to 44; that stretch reads VWLSVLFIFRILLLGTAVESA. The Extracellular portion of the chain corresponds to 45 to 76; sequence WGDEQSAFRCNTQQPGCENVCYDKSFPISHVR. 2 disulfide bridges follow: C54/C192 and C187/C198. Residues 77-97 traverse the membrane as a helical segment; it reads FWVLQIIFVSVPTLLYLAHVF. Residues 98–155 lie on the Cytoplasmic side of the membrane; sequence YVMRKEEKLNKKEEELKVAQTDGVNVEMHLKQIEIKKFKYGIEEHGKVKMRGGLLRTY. K144 participates in a covalent cross-link: Glycyl lysine isopeptide (Lys-Gly) (interchain with G-Cter in SUMO). Residues 156–176 traverse the membrane as a helical segment; the sequence is IISILFKSVFEVAFLLIQWYI. Residues 177–207 are Extracellular-facing; that stretch reads YGFSLSAVYTCKRDPCPHQVDCFLSRPTEKT. Residues 208-228 traverse the membrane as a helical segment; that stretch reads IFIIFMLVVSLVSLALNIIEL. Residues 229 to 382 lie on the Cytoplasmic side of the membrane; that stretch reads FYVFFKGVKD…SRPRPDDLEI (154 aa). K237 participates in a covalent cross-link: Glycyl lysine isopeptide (Lys-Gly) (interchain with G-Cter in SUMO). The tract at residues 244–382 is interaction with NOV; that stretch reads SDPYHATTGP…SRPRPDDLEI (139 aa). Y247 is modified (phosphotyrosine). S255, S257, and S262 each carry phosphoserine. Positions 264-382 are interaction with UBQLN4; the sequence is KYAYFNGCSS…SRPRPDDLEI (119 aa). At C271 the chain carries S-nitrosocysteine. Phosphothreonine is present on T275. S306, S314, and S325 each carry phosphoserine. Residues 317–332 show a composition bias toward polar residues; the sequence is QNRMGQAGSTISNSHA. The disordered stretch occupies residues 317–382; the sequence is QNRMGQAGST…SRPRPDDLEI (66 aa). T326 bears the Phosphothreonine mark. S328, S330, and S365 each carry phosphoserine. Positions 362–374 are enriched in low complexity; the sequence is RPSSRASSRASSR. At S368 the chain carries Phosphoserine; by PKC/PRKCG and PKC/PRKCD. S369 and S373 each carry phosphoserine.

The protein belongs to the connexin family. Alpha-type (group II) subfamily. In terms of assembly, a connexon is composed of a hexamer of connexins. Interacts with SGSM3. Interacts with RIC1/CIP150. Interacts with CNST and CSNK1D. Interacts (via C-terminus) with TJP1. Interacts (via C-terminus) with SRC (via SH3 domain). Interacts (not ubiquitinated) with UBQLN4 (via UBA domain). Interacts with NOV. Interacts with TMEM65. Interacts with ANK3/ANKG and PKP2. Post-translationally, contains at least one intramolecular disulfide bond. In terms of processing, phosphorylation at Ser-325, Ser-328 and Ser-330 by CK1 modulates gap junction assembly. Phosphorylated at Ser-368 by PRKCG; phosphorylation induces disassembly of gap junction plaques and inhibition of gap junction activity. Phosphorylation at Ser-368 by PRKCD triggers its internalization into small vesicles leading to proteasome-mediated degradation. Sumoylated with SUMO1, SUMO2 and SUMO3, which may regulate the level of functional Cx43 gap junctions at the plasma membrane. May be desumoylated by SENP1 or SENP2. Post-translationally, S-nitrosylation at Cys-271 is enriched at the muscle endothelial gap junction in arteries, it augments channel permeability and may regulate of smooth muscle cell to endothelial cell communication. In terms of processing, acetylated in the developing cortex; leading to delocalization from the cell membrane. In terms of tissue distribution, detected in ventricle and atrium (at protein level).

It is found in the cell membrane. It localises to the cell junction. The protein resides in the gap junction. Its subcellular location is the endoplasmic reticulum. In terms of biological role, gap junction protein that acts as a regulator of bladder capacity. A gap junction consists of a cluster of closely packed pairs of transmembrane channels, the connexons, through which materials of low MW diffuse from one cell to a neighboring cell. Negative regulator of bladder functional capacity: acts by enhancing intercellular electrical and chemical transmission, thus sensitizing bladder muscles to cholinergic neural stimuli and causing them to contract. May play a role in cell growth inhibition through the regulation of NOV expression and localization. Plays an essential role in gap junction communication in the ventricles. The polypeptide is Gap junction alpha-1 protein (Gja1) (Rattus norvegicus (Rat)).